Consider the following 455-residue polypeptide: UDP-glycosyltransferase 87A2 (455 aa).

An N-acetylmethionine modification is found at Met1. UDP-alpha-D-glucose is bound by residues Ser278, 327-329 (CDQ), 344-352 (HCGFNSTLE), and 366-369 (FWDQ).

The protein belongs to the UDP-glycosyltransferase family.

In Arabidopsis thaliana (Mouse-ear cress), this protein is UDP-glycosyltransferase 87A2 (UGT87A2).